A 117-amino-acid chain; its full sequence is Immunoglobulin lambda variable 6-57 (117 aa).

The signal sequence occupies residues 1-19 (MAWAPLLLTLLAHCTGSWA). The tract at residues 20-44 (NFMLTQPHSVSESPGKTVTISCTGS) is framework-1. The 98-residue stretch at 20–117 (NFMLTQPHSV…YYCQSYDSSN (98 aa)) folds into the Ig-like domain. Cysteines 41 and 110 form a disulfide. The interval 45–52 (SGSIASNY) is complementarity-determining-1. Residues 53–69 (VQWYQQRPGSAPTTVIY) form a framework-2 region. Positions 65 to 97 (TTVIYEDNQRPSGVPDRFSGSIDSSSNSASLTI) are disordered. Residues 70 to 72 (EDN) are complementarity-determining-2. A framework-3 region spans residues 73-110 (QRPSGVPDRFSGSIDSSSNSASLTISGLKTEDEADYYC). A compositionally biased stretch (low complexity) spans 83–97 (SGSIDSSSNSASLTI). The interval 111-117 (QSYDSSN) is complementarity-determining-3.

In terms of assembly, immunoglobulins are composed of two identical heavy chains and two identical light chains; disulfide-linked.

Its subcellular location is the secreted. The protein resides in the cell membrane. V region of the variable domain of immunoglobulin light chains that participates in the antigen recognition. Immunoglobulins, also known as antibodies, are membrane-bound or secreted glycoproteins produced by B lymphocytes. In the recognition phase of humoral immunity, the membrane-bound immunoglobulins serve as receptors which, upon binding of a specific antigen, trigger the clonal expansion and differentiation of B lymphocytes into immunoglobulins-secreting plasma cells. Secreted immunoglobulins mediate the effector phase of humoral immunity, which results in the elimination of bound antigens. The antigen binding site is formed by the variable domain of one heavy chain, together with that of its associated light chain. Thus, each immunoglobulin has two antigen binding sites with remarkable affinity for a particular antigen. The variable domains are assembled by a process called V-(D)-J rearrangement and can then be subjected to somatic hypermutations which, after exposure to antigen and selection, allow affinity maturation for a particular antigen. The polypeptide is Immunoglobulin lambda variable 6-57 (Homo sapiens (Human)).